The chain runs to 110 residues: Small ribosomal subunit protein bS6 (110 aa).

This sequence belongs to the bacterial ribosomal protein bS6 family.

In terms of biological role, binds together with bS18 to 16S ribosomal RNA. This chain is Small ribosomal subunit protein bS6 (rpsF), found in Aquifex aeolicus (strain VF5).